The chain runs to 660 residues: DNA ligase (660 aa).

NAD(+)-binding positions include 33-37, 82-83, and Glu-110; these read DFVYD and SL. Lys-112 acts as the N6-AMP-lysine intermediate in catalysis. NAD(+)-binding residues include Arg-133, Glu-167, Lys-281, and Lys-305. Residues Cys-396, Cys-399, Cys-412, and Cys-417 each contribute to the Zn(2+) site. The 78-residue stretch at 583–660 folds into the BRCT domain; the sequence is DENKLLVGKK…SFEDIKSYLD (78 aa).

Belongs to the NAD-dependent DNA ligase family. LigA subfamily. Mg(2+) is required as a cofactor. It depends on Mn(2+) as a cofactor.

It carries out the reaction NAD(+) + (deoxyribonucleotide)n-3'-hydroxyl + 5'-phospho-(deoxyribonucleotide)m = (deoxyribonucleotide)n+m + AMP + beta-nicotinamide D-nucleotide.. DNA ligase that catalyzes the formation of phosphodiester linkages between 5'-phosphoryl and 3'-hydroxyl groups in double-stranded DNA using NAD as a coenzyme and as the energy source for the reaction. It is essential for DNA replication and repair of damaged DNA. The sequence is that of DNA ligase from Borreliella afzelii (strain PKo) (Borrelia afzelii).